The following is a 499-amino-acid chain: Long chain base biosynthesis protein 2b (499 aa).

The helical transmembrane segment at Val5–His25 threads the bilayer. The residue at position 322 (Lys322) is an N6-(pyridoxal phosphate)lysine.

This sequence belongs to the class-II pyridoxal-phosphate-dependent aminotransferase family. Heterodimer with LCB1. Component of the serine palmitoyltransferase (SPT) complex, composed of LCB1 and LCB2. Pyridoxal 5'-phosphate is required as a cofactor.

The protein localises to the endoplasmic reticulum membrane. It carries out the reaction L-serine + hexadecanoyl-CoA + H(+) = 3-oxosphinganine + CO2 + CoA. The protein operates within lipid metabolism; sphingolipid metabolism. In terms of biological role, serine palmitoyltransferase (SPT). The heterodimer formed with LCB1 constitutes the catalytic core. This Oryza sativa subsp. japonica (Rice) protein is Long chain base biosynthesis protein 2b.